The primary structure comprises 219 residues: Histone H1.4 (219 aa).

Positions 1–15 are enriched in low complexity; the sequence is MSETAPAAPAAPAPA. Residues 1 to 41 form a disordered region; sequence MSETAPAAPAAPAPAEKTPVKKKARKSAGAAKRKASGPPVS. Residue Ser-2 is modified to N-acetylserine. Position 2 is a phosphoserine (Ser-2). Lys-17 is modified (N6-acetyllysine). Position 18 is a phosphothreonine (Thr-18). A compositionally biased stretch (basic residues) spans 20–35; it reads VKKKARKSAGAAKRKA. An N6-acetyllysine; alternate modification is found at Lys-26. An N6-methyllysine; alternate modification is found at Lys-26. Lys-34 bears the N6-(beta-hydroxybutyryl)lysine; alternate mark. Lys-34 carries the post-translational modification N6-succinyllysine; alternate. Ser-36 carries the post-translational modification Phosphoserine. An H15 domain is found at 36–109; that stretch reads SGPPVSELIT…GASGSFKLNK (74 aa). Lys-52 is modified (N6-(beta-hydroxybutyryl)lysine). Citrulline is present on Arg-54. N6-(beta-hydroxybutyryl)lysine is present on residues Lys-64, Lys-85, Lys-90, and Lys-106. The disordered stretch occupies residues 92–219; the sequence is TLVQTKGTGA…KPKKAAAKKK (128 aa). The segment covering 119-140 has biased composition (basic residues); that stretch reads KAKKAGAAKAKKPAGAAKKPKK. Position 146 is a phosphothreonine (Thr-146). 2 stretches are compositionally biased toward basic residues: residues 149–160 and 168–185; these read KSAKKTPKKAKK and KKAK…KKAP. Ser-150 is modified (ADP-ribosylserine). Position 187 is a phosphoserine (Ser-187). The span at 192–219 shows a compositional bias: basic residues; that stretch reads KAVKPKAAKPKTAKPKAAKPKKAAAKKK.

It belongs to the histone H1/H5 family. Post-translationally, H1 histones are progressively phosphorylated during the cell cycle, becoming maximally phosphorylated during late G2 phase and M phase, and being dephosphorylated sharply thereafter. Acetylated at Lys-26. Deacetylated at Lys-26 by SIRT1. In terms of processing, citrullination at Arg-54 (H1R54ci) by PADI4 takes place within the DNA-binding site of H1 and results in its displacement from chromatin and global chromatin decondensation, thereby promoting pluripotency and stem cell maintenance. Post-translationally, ADP-ribosylated on Ser-150 in response to DNA damage.

It localises to the nucleus. It is found in the chromosome. Functionally, histone H1 protein binds to linker DNA between nucleosomes forming the macromolecular structure known as the chromatin fiber. Histones H1 are necessary for the condensation of nucleosome chains into higher-order structured fibers. Also acts as a regulator of individual gene transcription through chromatin remodeling, nucleosome spacing and DNA methylation. The protein is Histone H1.4 of Homo sapiens (Human).